The primary structure comprises 143 residues: Small ribosomal subunit protein uS11c (143 aa).

This sequence belongs to the universal ribosomal protein uS11 family. Part of the 30S ribosomal subunit.

It is found in the plastid. The protein localises to the chloroplast. This is Small ribosomal subunit protein uS11c from Cenchrus americanus (Pearl millet).